A 968-amino-acid polypeptide reads, in one-letter code: RNA polymerase-associated protein RapA (968 aa).

Residues 164–334 (DVGRRHAPRV…FARLRLLDPN (171 aa)) enclose the Helicase ATP-binding domain. Residue 177–184 (DEVGLGKT) coordinates ATP. The short motif at 280 to 283 (DEAH) is the DEAH box element. The region spanning 490–685 (RVEWLMGYLT…ALKAQLEQGR (196 aa)) is the Helicase C-terminal domain.

It belongs to the SNF2/RAD54 helicase family. RapA subfamily. Interacts with the RNAP. Has a higher affinity for the core RNAP than for the holoenzyme. Its ATPase activity is stimulated by binding to RNAP.

Functionally, transcription regulator that activates transcription by stimulating RNA polymerase (RNAP) recycling in case of stress conditions such as supercoiled DNA or high salt concentrations. Probably acts by releasing the RNAP, when it is trapped or immobilized on tightly supercoiled DNA. Does not activate transcription on linear DNA. Probably not involved in DNA repair. The chain is RNA polymerase-associated protein RapA from Salmonella paratyphi C (strain RKS4594).